Consider the following 180-residue polypeptide: Crossover junction endodeoxyribonuclease RuvC (180 aa).

Residues D7, E66, and D138 contribute to the active site. Mg(2+) contacts are provided by D7, E66, and D138.

It belongs to the RuvC family. As to quaternary structure, homodimer which binds Holliday junction (HJ) DNA. The HJ becomes 2-fold symmetrical on binding to RuvC with unstacked arms; it has a different conformation from HJ DNA in complex with RuvA. In the full resolvosome a probable DNA-RuvA(4)-RuvB(12)-RuvC(2) complex forms which resolves the HJ. The cofactor is Mg(2+).

It is found in the cytoplasm. The catalysed reaction is Endonucleolytic cleavage at a junction such as a reciprocal single-stranded crossover between two homologous DNA duplexes (Holliday junction).. Its function is as follows. The RuvA-RuvB-RuvC complex processes Holliday junction (HJ) DNA during genetic recombination and DNA repair. Endonuclease that resolves HJ intermediates. Cleaves cruciform DNA by making single-stranded nicks across the HJ at symmetrical positions within the homologous arms, yielding a 5'-phosphate and a 3'-hydroxyl group; requires a central core of homology in the junction. The consensus cleavage sequence is 5'-(A/T)TT(C/G)-3'. Cleavage occurs on the 3'-side of the TT dinucleotide at the point of strand exchange. HJ branch migration catalyzed by RuvA-RuvB allows RuvC to scan DNA until it finds its consensus sequence, where it cleaves and resolves the cruciform DNA. This chain is Crossover junction endodeoxyribonuclease RuvC, found in Janthinobacterium sp. (strain Marseille) (Minibacterium massiliensis).